A 281-amino-acid chain; its full sequence is UPF0294 protein VP2298 (281 aa).

It belongs to the UPF0294 family.

The protein localises to the cytoplasm. In Vibrio parahaemolyticus serotype O3:K6 (strain RIMD 2210633), this protein is UPF0294 protein VP2298.